The primary structure comprises 224 residues: Cytidylate kinase (224 aa).

11–19 (GPAAAGKST) is a binding site for ATP.

Belongs to the cytidylate kinase family. Type 1 subfamily.

It localises to the cytoplasm. The enzyme catalyses CMP + ATP = CDP + ADP. The catalysed reaction is dCMP + ATP = dCDP + ADP. The sequence is that of Cytidylate kinase from Geobacillus thermodenitrificans (strain NG80-2).